Here is a 278-residue protein sequence, read N- to C-terminus: HTH-type transcriptional activator RhaS (278 aa).

Residues 174–272 (NQLLAWLEDH…DWSPRDIRQG (99 aa)) form the HTH araC/xylS-type domain. DNA-binding regions (H-T-H motif) lie at residues 191–212 (EEVA…KQQT) and 239–262 (VTDI…RREF).

As to quaternary structure, binds DNA as a dimer.

The protein resides in the cytoplasm. In terms of biological role, activates expression of the rhaBAD and rhaT operons. The chain is HTH-type transcriptional activator RhaS from Klebsiella pneumoniae (strain 342).